A 511-amino-acid polypeptide reads, in one-letter code: MRFTLYGLLGFASLLHAAPIAENLSTTLKSLNVNPADFSLWDQRNFLGNPRLTCVVLEKLFGSKSTGVYESGYTALTEITWSQTCWVNPACIVSPANAQDVSKAIIVLRALQTKFSVRSGGHMANPGFSSAGPDAVLISLSNLTKLSLSSDKSIATIGVGNRWGAVYNYLQPYNVTVIGGRIGTVGSALVLGGGLNYFSGQFGLSADTVERFQVVLSDGSIVTATRTKNSDLFQALKGGSANFGIVTEFDLRTRYSGPLYYEAVLYPGDQYPALMKALVEYQRNGSLDTKASLVTSFRVEGNLVVFLYLDPVIRPSAFDPFYSVPSIPFFPPGFATITELVAALGIGFSSEPERDATRVTSFETDESILNYSYGIWQQVVATLPANASLEWVPQPIGAGLKAKGDQYGGNILGLPAKNHIWLDIVAKWKNPADDAFVLNASKFILDKTDAFAKSKNKYLPYLFMNDAYADQKVLRSYGTTNFNKIVQVSKKYDPSQTFQKLQGNGYLWTRE.

Residues 1–17 (MRFTLYGLLGFASLLHA) form the signal peptide. Positions 85-256 (CWVNPACIVS…TEFDLRTRYS (172 aa)) constitute an FAD-binding PCMH-type domain. Histidine 122 carries the pros-8alpha-FAD histidine modification.

It belongs to the oxygen-dependent FAD-linked oxidoreductase family.

It functions in the pathway secondary metabolite biosynthesis; terpenoid biosynthesis. Its function is as follows. FAD-dependent monooxygenase; part of the gene cluster that mediates the biosynthesis of sesquiterpenyl epoxy-cyclohexenoids (SECs) such as anthrobotrisins and arthrosporols, metabolites that possess a novel hybrid carbon skeleton consisting of a polyketide-derived epoxycyclohexenol combined with a terpenoid-derived monocyclic sesquiterpenol substructure (PKS-PTS hybrid). The SEC pathway plays an important role for fungal soil colonization via decreasing fungal nematode-capturing ability. Within the pathway, the FAD-dependent monooxygenase AOL_s00215g279 plays a role in the oxygenation of the phenol moiety, most likely in the epoxy formation. The pathway begins with the biosynthesis of 6-methylsalicylic acid (6-MSA), the first precursor of the polyketide-derived epoxycyclohexenol in arthrosporols, by the polyketide synthase (PKS) AOL_s00215g283 via condensation of 1 acetate and 3 malonate units. The 6-methylsalicylic acid decarboxylase AOL_s00215g281 then catalyzes the decarboxylation of 6-methylsalicylic acid to yield m-cresol. The cytochrome P450 monooxygenase AOL_s00215g282 further oxidizes m-cresol to yield toluquinol. With the assistance of the oxidoreductase AOL_s00215g277, the polyprenyl transferase AOL_s00215g276 catalyzes the farnesylation of toluquinol to produce farnesyl hydroquinone, the hybrid precursor for biosynthesis of SECs. Farnesyl hydroquinone undergoes epoxidation and then subsequent dehydrogenation to form farnesyl epoxy-quinone, the first and simplest SEC. The cytochrome P450 monooxygenase AOL_s00215g278 and the FAD-dependent monooxygenase AOL_s00215g279 might be involved in the oxygenation of the phenol moiety, most likely in the epoxy formation. The cytochrome P450 monooxygenases AOL_s00215g274 and AOL_s00215g280 are involved in specific regional ketone reductions at respectively C-4 and C-1 of farnesyl epoxy-quinone PubMed:33823587. This is FAD-dependent monooxygenase AOL_s00215g279 from Arthrobotrys oligospora (strain ATCC 24927 / CBS 115.81 / DSM 1491) (Nematode-trapping fungus).